We begin with the raw amino-acid sequence, 453 residues long: Bifunctional protein GlmU (453 aa).

Residues 1 to 226 (MSFSAVILAA…PIEVEGVNNR (226 aa)) are pyrophosphorylase. Residues 8-11 (LAAG), Lys22, Gln73, 78-79 (GT), 100-102 (YGD), Gly137, Glu151, Asn166, and Asn224 contribute to the UDP-N-acetyl-alpha-D-glucosamine site. Mg(2+) is bound at residue Asp102. Mg(2+) is bound at residue Asn224. The segment at 227-247 (IQLARLERAYQAMQAERLLEQ) is linker. The N-acetyltransferase stretch occupies residues 248 to 453 (GVMLRDPSRF…KGWKRPVKQK (206 aa)). UDP-N-acetyl-alpha-D-glucosamine is bound by residues Arg330 and Lys348. His360 (proton acceptor) is an active-site residue. Tyr363 and Asn374 together coordinate UDP-N-acetyl-alpha-D-glucosamine. Acetyl-CoA-binding positions include Ala377, 383–384 (NY), Ser402, Ala420, and Arg437.

It in the N-terminal section; belongs to the N-acetylglucosamine-1-phosphate uridyltransferase family. In the C-terminal section; belongs to the transferase hexapeptide repeat family. Homotrimer. The cofactor is Mg(2+).

It localises to the cytoplasm. The enzyme catalyses alpha-D-glucosamine 1-phosphate + acetyl-CoA = N-acetyl-alpha-D-glucosamine 1-phosphate + CoA + H(+). It carries out the reaction N-acetyl-alpha-D-glucosamine 1-phosphate + UTP + H(+) = UDP-N-acetyl-alpha-D-glucosamine + diphosphate. Its pathway is nucleotide-sugar biosynthesis; UDP-N-acetyl-alpha-D-glucosamine biosynthesis; N-acetyl-alpha-D-glucosamine 1-phosphate from alpha-D-glucosamine 6-phosphate (route II): step 2/2. It participates in nucleotide-sugar biosynthesis; UDP-N-acetyl-alpha-D-glucosamine biosynthesis; UDP-N-acetyl-alpha-D-glucosamine from N-acetyl-alpha-D-glucosamine 1-phosphate: step 1/1. It functions in the pathway bacterial outer membrane biogenesis; LPS lipid A biosynthesis. Functionally, catalyzes the last two sequential reactions in the de novo biosynthetic pathway for UDP-N-acetylglucosamine (UDP-GlcNAc). The C-terminal domain catalyzes the transfer of acetyl group from acetyl coenzyme A to glucosamine-1-phosphate (GlcN-1-P) to produce N-acetylglucosamine-1-phosphate (GlcNAc-1-P), which is converted into UDP-GlcNAc by the transfer of uridine 5-monophosphate (from uridine 5-triphosphate), a reaction catalyzed by the N-terminal domain. The protein is Bifunctional protein GlmU of Photobacterium profundum (strain SS9).